The chain runs to 980 residues: Protein translocase subunit SecA (980 aa).

Residues Q109, 127–131 (GEGKT), and D529 contribute to the ATP site. A disordered region spans residues 954–980 (QKIGRNDPCPCGSGKKYKHCHGKDNPQ). Residues C962, C964, C973, and H974 each coordinate Zn(2+).

This sequence belongs to the SecA family. As to quaternary structure, monomer and homodimer. Part of the essential Sec protein translocation apparatus which comprises SecA, SecYEG and auxiliary proteins SecDF. Other proteins may also be involved. Zn(2+) serves as cofactor.

The protein localises to the cell inner membrane. Its subcellular location is the cytoplasm. The catalysed reaction is ATP + H2O + cellular proteinSide 1 = ADP + phosphate + cellular proteinSide 2.. In terms of biological role, part of the Sec protein translocase complex. Interacts with the SecYEG preprotein conducting channel. Has a central role in coupling the hydrolysis of ATP to the transfer of proteins into and across the cell membrane, serving as an ATP-driven molecular motor driving the stepwise translocation of polypeptide chains across the membrane. The protein is Protein translocase subunit SecA of Brachyspira hyodysenteriae (strain ATCC 49526 / WA1).